Here is a 490-residue protein sequence, read N- to C-terminus: Homoserine O-acetyltransferase (490 aa).

Residues 47–353 form the AB hydrolase-1 domain; that stretch reads NAILVCHALT…SQFGHDAFLI (307 aa). The Nucleophile role is filled by Ser-152. Arg-221 provides a ligand contact to substrate. Catalysis depends on residues Asp-315 and His-348. Asp-349 is a substrate binding site. CBS domains lie at 375 to 432 and 436 to 490; these read MNTQ…YTSL and MSSQ…GRGP.

Belongs to the AB hydrolase superfamily. MetX family. Homodimer.

It localises to the cytoplasm. It catalyses the reaction L-homoserine + acetyl-CoA = O-acetyl-L-homoserine + CoA. It functions in the pathway amino-acid biosynthesis; L-methionine biosynthesis via de novo pathway; O-acetyl-L-homoserine from L-homoserine: step 1/1. Transfers an acetyl group from acetyl-CoA to L-homoserine, forming acetyl-L-homoserine. The polypeptide is Homoserine O-acetyltransferase (Methanosphaerula palustris (strain ATCC BAA-1556 / DSM 19958 / E1-9c)).